Here is a 103-residue protein sequence, read N- to C-terminus: Large ribosomal subunit protein bL21 (103 aa).

The protein belongs to the bacterial ribosomal protein bL21 family. Part of the 50S ribosomal subunit. Contacts protein L20.

Functionally, this protein binds to 23S rRNA in the presence of protein L20. The protein is Large ribosomal subunit protein bL21 of Actinobacillus succinogenes (strain ATCC 55618 / DSM 22257 / CCUG 43843 / 130Z).